A 295-amino-acid chain; its full sequence is Ribosomal protein L11 methyltransferase (295 aa).

Residues threonine 145, glycine 166, aspartate 188, and asparagine 230 each coordinate S-adenosyl-L-methionine.

Belongs to the methyltransferase superfamily. PrmA family.

The protein localises to the cytoplasm. It carries out the reaction L-lysyl-[protein] + 3 S-adenosyl-L-methionine = N(6),N(6),N(6)-trimethyl-L-lysyl-[protein] + 3 S-adenosyl-L-homocysteine + 3 H(+). Functionally, methylates ribosomal protein L11. The protein is Ribosomal protein L11 methyltransferase of Shewanella amazonensis (strain ATCC BAA-1098 / SB2B).